Reading from the N-terminus, the 342-residue chain is Succinylglutamate desuccinylase (342 aa).

Zn(2+)-binding residues include histidine 62, glutamate 65, and histidine 158. The active site involves glutamate 222.

This sequence belongs to the AspA/AstE family. Succinylglutamate desuccinylase subfamily. The cofactor is Zn(2+).

It catalyses the reaction N-succinyl-L-glutamate + H2O = L-glutamate + succinate. Its pathway is amino-acid degradation; L-arginine degradation via AST pathway; L-glutamate and succinate from L-arginine: step 5/5. In terms of biological role, transforms N(2)-succinylglutamate into succinate and glutamate. This chain is Succinylglutamate desuccinylase, found in Shewanella frigidimarina (strain NCIMB 400).